We begin with the raw amino-acid sequence, 424 residues long: Histidine--tRNA ligase (424 aa).

It belongs to the class-II aminoacyl-tRNA synthetase family. Homodimer.

It is found in the cytoplasm. It catalyses the reaction tRNA(His) + L-histidine + ATP = L-histidyl-tRNA(His) + AMP + diphosphate + H(+). This chain is Histidine--tRNA ligase, found in Salmonella paratyphi A (strain ATCC 9150 / SARB42).